We begin with the raw amino-acid sequence, 1121 residues long: Ataxin-2 homolog (1121 aa).

Positions 1-10 are enriched in basic residues; sequence MNNNSKRKTR. The tract at residues 1–53 is disordered; the sequence is MNNNSKRKTRPSGGGGGGGASGGISRYNANDNSLRPANNKSGAAGNSAGAGAG. Over residues 12–22 the composition is skewed to gly residues; the sequence is SGGGGGGGASG. Positions 27-36 are enriched in polar residues; that stretch reads YNANDNSLRP. The span at 37 to 47 shows a compositional bias: low complexity; sequence ANNKSGAAGNS. One can recognise a Sm domain in the interval 71-146; it reads FFMHSATALV…VVKIVAKDFD (76 aa). 2 positions are modified to phosphoserine: Ser-219 and Ser-232. 4 disordered regions span residues 270-376, 422-458, 476-935, and 1039-1076; these read FAAV…GQGG, GKVM…GGYQ, MHGS…TTGT, and QTPQ…TPPT. A compositionally biased stretch (basic and acidic residues) spans 274–310; the sequence is ERPEQDHRRDGDRERERNDRDREREERDRDRDRDRGN. The segment covering 323–347 has biased composition (polar residues); the sequence is ETMSSDRYITKQTRGPQMSHVSMSS. 2 stretches are compositionally biased toward gly residues: residues 367 to 376 and 434 to 448; these read ISGGGAGQGG and SGGG…GNGN. 2 stretches are compositionally biased toward polar residues: residues 476-487 and 499-524; these read MHGSSQYRNPSH and ANAN…NSLN. Composition is skewed to low complexity over residues 552 to 596, 623 to 684, 697 to 711, and 720 to 773; these read PPLQ…PQRQ, PPQQ…MQHQ, QPHY…QPQP, and QQQQ…APEP. Residues 774 to 789 are compositionally biased toward pro residues; the sequence is SQQPLPLYHPMPPPQT. Composition is skewed to low complexity over residues 807–825 and 835–890; these read ILTA…TPKP and TTTP…STPV. Composition is skewed to pro residues over residues 914 to 926 and 1048 to 1062; these read PSRP…PVPM and PGQP…PQPS.

Belongs to the ataxin-2 family.

The protein localises to the cytoplasm. Regulator of actin filament formation, though it does not directly assemble with actin filaments. Required for oocyte specification and oocyte positioning in the female germline. Also required for normal eye development and bristle morphology. The chain is Ataxin-2 homolog from Drosophila pseudoobscura pseudoobscura (Fruit fly).